The following is a 388-amino-acid chain: Protochlorophyllide reductase A, chloroplastic (388 aa).

The N-terminal 74 residues, 1–74 (MALQLLPSTL…SPSGKKTLRQ (74 aa)), are a transit peptide targeting the chloroplast. The span at 48–68 (VATAPSPVTTSPGSTASSPSG) shows a compositional bias: low complexity. Residues 48–69 (VATAPSPVTTSPGSTASSPSGK) form a disordered region.

The protein belongs to the short-chain dehydrogenases/reductases (SDR) family. POR subfamily.

Its subcellular location is the plastid. It localises to the chloroplast. The catalysed reaction is chlorophyllide a + NADP(+) = protochlorophyllide a + NADPH + H(+). It participates in porphyrin-containing compound metabolism; chlorophyll biosynthesis. Its function is as follows. Phototransformation of protochlorophyllide (Pchlide) to chlorophyllide (Chlide). The sequence is that of Protochlorophyllide reductase A, chloroplastic (PORA) from Hordeum vulgare (Barley).